A 448-amino-acid chain; its full sequence is MSKKLISIVDVKDYVGQEVTIGAWVANKSGKGKIAFVQLRDGSAFFQGVAFKPNFIEKYGEESGLEKFDVIKRLNQETSVYVTGIVKEDERSKFGYELDITDLEVIGESHEYPITPKEHGTDFLMDNRHLWLRSRKQMAVMQIRNAIIYSTYEFFDQNGFIKFDSPILSENAAEDSTELFETDYFGKPAFLSQSGQLYLEAGAMALGRVFDFGPVFRAEKSKTRRHLTEFWMMDAEYSFLSHEESLDLQEAYVKALIQGVLDRAPQALDILERDVEALKRYIAEPFKRVSYDDAITLLQEHEADEDTDYEHLEHGDDFGSPHETWISNYFGVPTFVVNYPASFKAFYMKPVPGNPERVLCADLLAPEGYGEIIGGSMREDDYDALVAKMDELGMDKSEYDFYLDLRKYGSVPHGGFGIGIERMVTFVAGTKHIREAIPFPRMLHRIKP.

This sequence belongs to the class-II aminoacyl-tRNA synthetase family. As to quaternary structure, homodimer.

Its subcellular location is the cytoplasm. It catalyses the reaction tRNA(Asn) + L-asparagine + ATP = L-asparaginyl-tRNA(Asn) + AMP + diphosphate + H(+). The protein is Asparagine--tRNA ligase of Streptococcus agalactiae serotype Ia (strain ATCC 27591 / A909 / CDC SS700).